Reading from the N-terminus, the 408-residue chain is Protein SPATA31F3 (408 aa).

A helical membrane pass occupies residues 11-31 (VGYPFYTYGSIIIIALIIWQV). The interval 51 to 71 (QKVKQRAKEKTPRARRHSRKE) is disordered. S152 is modified (phosphoserine). Disordered regions lie at residues 297–316 (TKTK…MKGA) and 351–408 (LPLS…SASS). Residues 351–392 (LPLSSGSSKRSPLLTCATQPENPSHVSVSTSAEGTCLPQEST) show a composition bias toward polar residues.

Belongs to the SPATA31 family.

The protein localises to the membrane. This is Protein SPATA31F3 (SPATA31F3) from Bos taurus (Bovine).